Reading from the N-terminus, the 62-residue chain is Cuticle protein 6.4 (62 aa).

Its function is as follows. Component of the cuticle of migratory locust which contains more than 100 different structural proteins. In Locusta migratoria (Migratory locust), this protein is Cuticle protein 6.4.